Reading from the N-terminus, the 78-residue chain is Large ribosomal subunit protein bL28 (78 aa).

Residues 1-33 form a disordered region; sequence MARKDDVTGEGPVTGNSVSDSNQKTNRRFKRNL. Over residues 14 to 24 the composition is skewed to polar residues; sequence TGNSVSDSNQK.

The protein belongs to the bacterial ribosomal protein bL28 family.

This Salinibacter ruber (strain DSM 13855 / M31) protein is Large ribosomal subunit protein bL28.